A 180-amino-acid chain; its full sequence is Large ribosomal subunit protein uL5 (180 aa).

It belongs to the universal ribosomal protein uL5 family. In terms of assembly, part of the 50S ribosomal subunit; part of the 5S rRNA/L5/L18/L25 subcomplex. Contacts the 5S rRNA and the P site tRNA. Forms a bridge to the 30S subunit in the 70S ribosome.

In terms of biological role, this is one of the proteins that bind and probably mediate the attachment of the 5S RNA into the large ribosomal subunit, where it forms part of the central protuberance. In the 70S ribosome it contacts protein S13 of the 30S subunit (bridge B1b), connecting the 2 subunits; this bridge is implicated in subunit movement. Contacts the P site tRNA; the 5S rRNA and some of its associated proteins might help stabilize positioning of ribosome-bound tRNAs. The sequence is that of Large ribosomal subunit protein uL5 from Ligilactobacillus salivarius (strain UCC118) (Lactobacillus salivarius).